The sequence spans 676 residues: Long-chain-fatty-acid--CoA ligase 1 (676 aa).

Position 246–257 (246–257 (YTSGSTGLPKGV)) interacts with ATP. Positions 511 to 560 (DGWFRTGDVGELTPEGLLRIIDRKKNLVKTQNGEYIALEKLESRYRTSSL) match the FACS motif.

Belongs to the ATP-dependent AMP-binding enzyme family. Mg(2+) serves as cofactor.

The enzyme catalyses a long-chain fatty acid + ATP + CoA = a long-chain fatty acyl-CoA + AMP + diphosphate. Functionally, esterification, concomitant with transport, of exogenous long-chain fatty acids into metabolically active CoA thioesters for subsequent degradation or incorporation into phospholipids. It may supplement intracellular myristoyl-CoA pools from exogenous myristate. Preferentially acts on C12:0-C16:0 fatty acids with myristic and pentadecanic acid (C15:0) having the highest activities. Appears to play a role in the maintenance of cell viability during stationary phase. The sequence is that of Long-chain-fatty-acid--CoA ligase 1 (lcf1) from Schizosaccharomyces pombe (strain 972 / ATCC 24843) (Fission yeast).